The sequence spans 415 residues: Coenzyme F420 hydrogenase subunit alpha (415 aa).

4 residues coordinate Ni(2+): C68, C71, C391, and C394.

Belongs to the [NiFe]/[NiFeSe] hydrogenase large subunit family. Heterocomplex of the form (alpha(1)beta(1)gamma(1))(8). Ni(2+) serves as cofactor. It depends on iron-sulfur cluster as a cofactor. Requires FAD as cofactor.

The catalysed reaction is oxidized coenzyme F420-(gamma-L-Glu)(n) + H2 + H(+) = reduced coenzyme F420-(gamma-L-Glu)(n). Its function is as follows. Reduces the physiological low-potential two-electron acceptor coenzyme F420, and the artificial one-electron acceptor methylviologen. The protein is Coenzyme F420 hydrogenase subunit alpha (frhA) of Methanocaldococcus jannaschii (strain ATCC 43067 / DSM 2661 / JAL-1 / JCM 10045 / NBRC 100440) (Methanococcus jannaschii).